Here is an 838-residue protein sequence, read N- to C-terminus: E3 ubiquitin-protein ligase RNF19A (838 aa).

The interval 41-61 (DRDLQSSASSVSLPSVKKAPK) is disordered. Residues 46-57 (SSASSVSLPSVK) are compositionally biased toward low complexity. A TRIAD supradomain region spans residues 128-351 (DFIECPLCLL…LSPSGCTFWG (224 aa)). Positions 132, 135, 150, 152, 155, 158, 176, 179, 219, 224, 241, 246, 251, 254, 259, 264, 301, and 304 each coordinate Zn(2+). The RING-type 1 zinc-finger motif lies at 132–179 (CPLCLLRHSKDRFPDIMTCHHRSCVDCLRQYLRIEISESRVNISCPEC). The segment at 199 to 264 (EKYEEFMLRR…KQIWHPNQTC (66 aa)) adopts an IBR-type zinc-finger fold. The RING-type 2; atypical zinc-finger motif lies at 301 to 332 (CPRCAAYIIKMNDGSCNHMTCAVCGCEFCWLC). The active site involves cysteine 316. The Zn(2+) site is built by cysteine 321, cysteine 324, cysteine 329, cysteine 332, histidine 340, and cysteine 347. The next 2 helical transmembrane spans lie at 368-388 (LVGA…AMII) and 424-444 (VIVS…IMLA). Disordered regions lie at residues 622 to 685 (SKPS…GNMK) and 700 to 721 (QQST…PSVA). Residues 630-662 (NSGSSSVDDGSATRSHAGGSSSGLPEGKSSATK) are compositionally biased toward polar residues. Serine 631 carries the phosphoserine modification. The tract at residues 660–838 (ATKWSKEATA…ELKVAIQTEI (179 aa)) is interaction with CASR. Positions 671-683 (KKSKSGKLRKKGN) are enriched in basic residues. Residues 700 to 717 (QQSTNSSEFEAPSLSDSM) show a composition bias toward polar residues.

It belongs to the RBR family. RNF19 subfamily. As to quaternary structure, interacts with UBE2L3 and UBE2L6. Interacts with transcription factor Sp1. Interacts with VCP, CASR, SNCAIP and with some SOD1 variants which cause amyotrophic lateral sclerosis, but not with wild-type SOD1. As to expression, widely expressed, with highest levels in heart. Ubiquitously expressed in the central nervous system.

Its subcellular location is the membrane. The protein localises to the cytoplasm. It localises to the cytoskeleton. The protein resides in the microtubule organizing center. It is found in the centrosome. The catalysed reaction is [E2 ubiquitin-conjugating enzyme]-S-ubiquitinyl-L-cysteine + [acceptor protein]-L-lysine = [E2 ubiquitin-conjugating enzyme]-L-cysteine + [acceptor protein]-N(6)-ubiquitinyl-L-lysine.. Its pathway is protein modification; protein ubiquitination. In terms of biological role, E3 ubiquitin-protein ligase which accepts ubiquitin from E2 ubiquitin-conjugating enzymes UBE2L3 and UBE2L6 in the form of a thioester and then directly transfers the ubiquitin to targeted substrates, such as SNCAIP or CASR. Specifically ubiquitinates pathogenic SOD1 variants, which leads to their proteasomal degradation and to neuronal protection. This Homo sapiens (Human) protein is E3 ubiquitin-protein ligase RNF19A (RNF19A).